Consider the following 330-residue polypeptide: Aspartate--ammonia ligase (330 aa).

The protein belongs to the class-II aminoacyl-tRNA synthetase family. AsnA subfamily.

It localises to the cytoplasm. The catalysed reaction is L-aspartate + NH4(+) + ATP = L-asparagine + AMP + diphosphate + H(+). The protein operates within amino-acid biosynthesis; L-asparagine biosynthesis; L-asparagine from L-aspartate (ammonia route): step 1/1. The sequence is that of Aspartate--ammonia ligase from Escherichia coli O45:K1 (strain S88 / ExPEC).